The chain runs to 138 residues: Large ribosomal subunit protein bL17 (138 aa).

Belongs to the bacterial ribosomal protein bL17 family. Part of the 50S ribosomal subunit. Contacts protein L32.

The sequence is that of Large ribosomal subunit protein bL17 from Methylorubrum populi (strain ATCC BAA-705 / NCIMB 13946 / BJ001) (Methylobacterium populi).